The sequence spans 584 residues: MWGVSSLDYDDDEELTRLLAVWDDEPLSLFLMNTFLLHQEGFRNLPFTVLRLSYAYRIFAKMLRAHGTPVAEDFMTRVAALARDEGLRDILGQRHAAEASRAEIAEALERVAERCDDRHGGSDDYVWLSRLLDLAPNYRQVELFQLLEKESRGQSRNSVWHLLRMDTVSATKFYEAFVSGCLPGAAAADGSGGGGSHYTGSRAGVSPGIQFGIKHEGLVKTLVECYVMHGREPVRDGLGLLIDPTSGLLGASMDLCFGVLKQGSGRTLLVEPCARVYEIKCRYKYLRKKEDPFVQNVLRRHDAAAVASLLQSHPVPGVEFRGERETPSAREFLLSHDAALFRATLKRARPLKPPEPLREYLADLLYLNKAECSEVIVFDAKHLNDDNSDGDATITINASLGLAAGDAAGGGADHHLRGSPGDSPPPIPFEDENTPELLGRLNVYEVARFSLPAFVNPRHQYYFQMLIQQYVLSQYYIKKHPDPERIDFRDLPTVYLVSAIFREREESELGCELLAGGRVFHCDHIPLLLIVTPVVFDPQFTRHAVSTVLDRWSRDLSRKTNLPIWVPNSANEYVVSSVPRPVSP.

The segment at 409–429 (GGGADHHLRGSPGDSPPPIPF) is disordered.

The protein belongs to the herpesviridae alkaline nuclease family. In terms of assembly, interacts with major DNA-binding protein; this interaction increases the nuclease processivity of the alkaline exonuclease.

The protein resides in the host nucleus. It is found in the host cytoplasm. Functionally, plays a role in processing non linear or branched viral DNA intermediates in order to promote the production of mature packaged unit-length linear progeny viral DNA molecules. Exhibits endonuclease and exonuclease activities and accepts both double-stranded and single-stranded DNA as substrate. Exonuclease digestion of DNA is in the 5'-&gt; 3' direction and the products are 5'-monophosphate nucleosides. Additionally, forms a recombinase with the major DNA-binding protein, which displays strand exchange activity. The polypeptide is Alkaline nuclease (UL98) (Homo sapiens (Human)).